A 531-amino-acid polypeptide reads, in one-letter code: UDP-glucuronosyltransferase 2B13 (531 aa).

The first 24 residues, 1 to 24, serve as a signal peptide directing secretion; that stretch reads MPVKCISVLLLLLQLSCCFSSGSC. 3 N-linked (GlcNAc...) asparagine glycosylation sites follow: N69, N101, and N317. A helical membrane pass occupies residues 495 to 511; that stretch reads VIGFLLACVAITTYLIV.

It belongs to the UDP-glycosyltransferase family.

Its subcellular location is the microsome membrane. The protein resides in the endoplasmic reticulum membrane. It carries out the reaction glucuronate acceptor + UDP-alpha-D-glucuronate = acceptor beta-D-glucuronoside + UDP + H(+). Its function is as follows. UDPGT is of major importance in the conjugation and subsequent elimination of potentially toxic xenobiotics and endogenous compounds. Acts on small phenolic agents such as 2-beta-naphthol and 4-methylumbelliferone as well as bulky phenolic compounds like 2-hydroxy- and 4-hydroxybiphenyl. In contrast to 2B16 it is active toward octylgallate. In Oryctolagus cuniculus (Rabbit), this protein is UDP-glucuronosyltransferase 2B13 (UGT2B13).